Reading from the N-terminus, the 143-residue chain is Large ribosomal subunit protein uL11 (143 aa).

Belongs to the universal ribosomal protein uL11 family. As to quaternary structure, part of the ribosomal stalk of the 50S ribosomal subunit. Interacts with L10 and the large rRNA to form the base of the stalk. L10 forms an elongated spine to which L12 dimers bind in a sequential fashion forming a multimeric L10(L12)X complex. One or more lysine residues are methylated.

Functionally, forms part of the ribosomal stalk which helps the ribosome interact with GTP-bound translation factors. The polypeptide is Large ribosomal subunit protein uL11 (Novosphingobium aromaticivorans (strain ATCC 700278 / DSM 12444 / CCUG 56034 / CIP 105152 / NBRC 16084 / F199)).